A 155-amino-acid chain; its full sequence is Interleukin-2 (155 aa).

Positions 1-20 are cleaved as a signal peptide; the sequence is MYSRQLASCVALALVLLANS. O-linked (GalNAc...) threonine glycosylation occurs at Thr23. A disulfide bond links Cys78 and Cys126.

The protein belongs to the IL-2 family.

It is found in the secreted. Its function is as follows. Cytokine produced by activated CD4-positive helper T-cells and to a lesser extend activated CD8-positive T-cells and natural killer (NK) cells that plays pivotal roles in the immune response and tolerance. Binds to a receptor complex composed of either the high-affinity trimeric IL-2R (IL2RA/CD25, IL2RB/CD122 and IL2RG/CD132) or the low-affinity dimeric IL-2R (IL2RB and IL2RG). Interaction with the receptor leads to oligomerization and conformation changes in the IL-2R subunits resulting in downstream signaling starting with phosphorylation of JAK1 and JAK3. In turn, JAK1 and JAK3 phosphorylate the receptor to form a docking site leading to the phosphorylation of several substrates including STAT5. This process leads to activation of several pathways including STAT, phosphoinositide-3-kinase/PI3K and mitogen-activated protein kinase/MAPK pathways. Functions as a T-cell growth factor and can increase NK-cell cytolytic activity as well. Promotes strong proliferation of activated B-cells and subsequently immunoglobulin production. Plays a pivotal role in regulating the adaptive immune system by controlling the survival and proliferation of regulatory T-cells, which are required for the maintenance of immune tolerance. Moreover, participates in the differentiation and homeostasis of effector T-cell subsets, including Th1, Th2, Th17 as well as memory CD8-positive T-cells. This chain is Interleukin-2 (IL2), found in Meriones unguiculatus (Mongolian jird).